The primary structure comprises 293 residues: MPWIQLRINTNSDDAETISDLLMEEGSVSITFEDGKDTPIFEPKLGETPLWRDTVVVALFDAETDLTPTIAMLKTLPFLGENFSHKVEQIEDKDWVREWMDNFHPIQFGTRLWICPSWREIPDPTAVNVILDPGLAFGTGTHPTTALCLEWLDSLDLSNEEVIDFGCGSGILAVAALKLGAKNVTGIDIDYQAIDASRANAERNDVADKLALYLPEDQPADLKADVLVANILAGPLRELAPLIAERVKTGGKLALSGLLKEQAQEISDFYSQWFDMDAAVHKEDWSRLTGKRK.

4 residues coordinate S-adenosyl-L-methionine: Thr145, Gly166, Asp188, and Asn230.

This sequence belongs to the methyltransferase superfamily. PrmA family.

Its subcellular location is the cytoplasm. It carries out the reaction L-lysyl-[protein] + 3 S-adenosyl-L-methionine = N(6),N(6),N(6)-trimethyl-L-lysyl-[protein] + 3 S-adenosyl-L-homocysteine + 3 H(+). Methylates ribosomal protein L11. In Shewanella baltica (strain OS155 / ATCC BAA-1091), this protein is Ribosomal protein L11 methyltransferase.